A 324-amino-acid chain; its full sequence is Methenyltetrahydromethanopterin cyclohydrolase (324 aa).

This sequence belongs to the MCH family.

The protein localises to the cytoplasm. The catalysed reaction is 5,10-methenyl-5,6,7,8-tetrahydromethanopterin + H2O = N(5)-formyl-5,6,7,8-tetrahydromethanopterin + H(+). The protein operates within one-carbon metabolism; formaldehyde degradation; formate from formaldehyde (H(4)MPT route): step 3/5. Catalyzes the hydrolysis of methenyl-H(4)MPT(+) to 5-formyl-H(4)MPT. The chain is Methenyltetrahydromethanopterin cyclohydrolase from Methylobacterium sp. (strain 4-46).